Reading from the N-terminus, the 479-residue chain is Ammonium transporter Rh type C (479 aa).

Topologically, residues 1 to 9 are cytoplasmic; the sequence is MAWNTNLRW. Residues 10–30 form a helical membrane-spanning segment; that stretch reads RLPLTCLLLQVVMVILFGVFV. Over 31–60 the chain is Extracellular; it reads RYDFEADAHWWSERTHKNLSDVENEFYYRY. Asn-48 is a glycosylation site (N-linked (GlcNAc...) asparagine). Residues 61–81 form a helical membrane-spanning segment; it reads PSFQDVHVMVFVGFGFLMTFL. Topologically, residues 82 to 85 are cytoplasmic; it reads QRYG. Residues 86–106 form a helical membrane-spanning segment; sequence FSAVGFNFLLAAFGIQWALLM. Over 107 to 123 the chain is Extracellular; sequence QGWFHFLQGRYIVVGVE. The helical transmembrane segment at 124-144 threads the bilayer; sequence NLINADFCVASVCVAFGAVLG. Over 145–148 the chain is Cytoplasmic; that stretch reads KVSP. A helical transmembrane segment spans residues 149-169; the sequence is IQLLIMTFFQVTLFAVNEFIL. The Extracellular segment spans residues 170–177; the sequence is LNLLKVKD. A helical transmembrane segment spans residues 178–200; it reads AGGSMTIHTFGAYFGLTVTRILY. The Cytoplasmic segment spans residues 201–218; it reads RRNLEQSKERQNSVYQSD. The helical transmembrane segment at 219–239 threads the bilayer; it reads LFAMIGTLFLWMYWPSFNSAI. Over 240-250 the chain is Extracellular; the sequence is SYHGDSQHRAA. Residues 251 to 271 form a helical membrane-spanning segment; that stretch reads INTYCSLAACVLTSVAISSAL. The Cytoplasmic portion of the chain corresponds to 272-281; that stretch reads HKKGKLDMVH. A helical transmembrane segment spans residues 282–302; it reads IQNATLAGGVAVGTAAEMMLM. Residue Pro-303 is a topological domain, extracellular. Residues 304 to 324 form a helical membrane-spanning segment; it reads YGALIIGFVCGIISTLGFVYL. Topologically, residues 325-345 are cytoplasmic; that stretch reads TPFLESRLHIQDTCGINNLHG. Residues 346–366 traverse the membrane as a helical segment; sequence IPGIIGGIVGAVTAASASLEV. Residues 367-394 are Extracellular-facing; the sequence is YGKEGLVHSFDFQGFKGDWTARTQGKFQ. Residues 395–415 form a helical membrane-spanning segment; it reads IYGLLVTLAMALMGGIIVGLI. At 416–479 the chain is on the cytoplasmic side; that stretch reads LRLPFWGQPS…PMASSVPLVP (64 aa).

Belongs to the ammonium transporter (TC 2.A.49) family. Rh subfamily. Homotrimer. In terms of processing, N-glycosylated.

Its subcellular location is the cell membrane. It is found in the apical cell membrane. It catalyses the reaction NH4(+)(in) = NH4(+)(out). The catalysed reaction is methylamine(out) = methylamine(in). The enzyme catalyses CO2(out) = CO2(in). In terms of biological role, ammonium transporter involved in the maintenance of acid-base homeostasis. Transports ammonium and its related derivative methylammonium across the plasma membrane of epithelial cells likely contributing to renal transepithelial ammonia transport and ammonia metabolism. Postulated to primarily mediate an electroneutral bidirectional transport of NH3 ammonia species according to a mechanism that implies interaction of an NH4(+) ion with acidic residues of the pore entry followed by dissociation of NH4(+) into NH3 and H(+). As a result NH3 transits through the central pore and is protonated on the extracellular side reforming NH4(+). May act as a CO2 channel providing for renal acid secretion. The sequence is that of Ammonium transporter Rh type C (RHCG) from Pan troglodytes (Chimpanzee).